The sequence spans 339 residues: Adenosine deaminase (339 aa).

Histidine 15 and histidine 17 together coordinate Zn(2+). Positions 17, 19, and 172 each coordinate substrate. Residue histidine 199 coordinates Zn(2+). The active-site Proton donor is glutamate 202. Aspartate 279 is a Zn(2+) binding site.

The protein belongs to the metallo-dependent hydrolases superfamily. Adenosine and AMP deaminases family. Adenosine deaminase subfamily. Zn(2+) is required as a cofactor.

It carries out the reaction adenosine + H2O + H(+) = inosine + NH4(+). The catalysed reaction is 2'-deoxyadenosine + H2O + H(+) = 2'-deoxyinosine + NH4(+). Functionally, catalyzes the hydrolytic deamination of adenosine and 2-deoxyadenosine. The protein is Adenosine deaminase of Lacticaseibacillus casei (strain BL23) (Lactobacillus casei).